Consider the following 572-residue polypeptide: DNA mismatch repair protein MutL (572 aa).

This sequence belongs to the DNA mismatch repair MutL/HexB family.

In terms of biological role, this protein is involved in the repair of mismatches in DNA. It is required for dam-dependent methyl-directed DNA mismatch repair. May act as a 'molecular matchmaker', a protein that promotes the formation of a stable complex between two or more DNA-binding proteins in an ATP-dependent manner without itself being part of a final effector complex. In Dictyoglomus turgidum (strain DSM 6724 / Z-1310), this protein is DNA mismatch repair protein MutL.